Consider the following 245-residue polypeptide: Lytic switch protein BZLF1 (245 aa).

Residues 1 to 167 (MMDPNSTSED…RTRKPQQPES (167 aa)) are transactivation. Thr14 and Thr159 each carry phosphothreonine; by host. The short motif at 157–194 (RRTRKPQQPESLEECDSELEIKRYKNRVASRKCRAKFK) is the Bipartite nuclear localization signal element. 3 positions are modified to phosphoserine; by host: Ser167, Ser173, and Ser186. The region spanning 170 to 228 (ECDSELEIKRYKNRVASRKCRAKFKQLLQHYREVAAAKSSENDRLRLLLKQMCPSLDVD) is the bZIP domain. Residues 178 to 195 (KRYKNRVASRKCRAKFKQ) form a basic motif region. The interval 196–228 (LLQHYREVAAAKSSENDRLRLLLKQMCPSLDVD) is leucine-zipper. The interval 229 to 245 (SIIPRTPDVLHEDLLNF) is accessory activation domain.

The protein belongs to the bZIP family. In terms of assembly, homodimer. Interacts (via b-ZIP domain) with the DNA polymerase processivity factor BMRF1 (via N-terminus); this interaction may inhibit BZLF1-induced transcription of the BMRF1 promoter. Interacts with human UBN1, CRTC2 and RACK1. Interacts (via N-terminus) with human PAX5 (via N-terminus); this interaction inhibits BZLF1-mediated lytic viral reactivation. Interacts (via leucine-zipper domain) with host CEBPA; this interaction induces G1 host cell cycle arrest. Interacts (via C-terminus) with host TP53BP1 (via C-terminus); this interaction is involved in the activation of the viral lytic cycle. Interacts with host chromatin-remodeling ATPase INO80; this interaction participates to the activation of early lytic viral genes by BZLF1. Interacts with host regulator of chromatin SMARCA5/hSNF2H; this interaction participates to the activation of early lytic viral genes by BZLF1. Interacts with host PLSCR1/Phospholipid scramblase 1; this interaction negatively regulates the transcriptional regulatory activity of BZLF1 by preventing the formation of the BZLF1-CBP complex.

Its subcellular location is the host nucleus. Functionally, transcription factor that acts as a molecular switch to induce the transition from the latent to the lytic or productive phase of the virus cycle. Mediates the switch from the latent to the lytic cycle of infection in cells containing a highly methylated viral genome. Probably binds to silenced chromatin and recruits host chromatin-remodeling enzymes. Regulates this switch by binding to 2 types of ZEBRA response elements (ZREs): the CpG-free AP-1 like elements (latency) and the methylated CpG-containing elements (lytic replication). Activates preferentially the methylated forms of the viral lytic R (BRLF1) and Na (BRRF1) gene promoters, the latters being the first genes activated during Z-mediated reactivation in latently infected cells. BZLF1 and BRLF1 act together to trigger lytic replication. Also binds the lytic origin of replication, oriLyt. Induces G1 cell cycle arrest by stabilizing the host CCAAT/enhancer binding protein CEBPA. This function is important because the lytic cycle preferentially takes place in host cells arrested in G1. This chain is Lytic switch protein BZLF1, found in Epstein-Barr virus (strain B95-8) (HHV-4).